The primary structure comprises 219 residues: C-8 sterol isomerase erg2 (219 aa).

A helical transmembrane segment spans residues 1-21; the sequence is MKLTKFLTVFIPFIAGLIYYI.

It belongs to the ERG2 family.

It localises to the endoplasmic reticulum membrane. The catalysed reaction is fecosterol = episterol. The protein operates within steroid metabolism; ergosterol biosynthesis. Functionally, C-8 sterol isomerase; part of the third module of ergosterol biosynthesis pathway that includes by the late steps of the pathway. Erg2 catalyzes the reaction which results in unsaturation at C-7 in the B ring of sterols and thus converts fecosterol to episterol. The third module or late pathway involves the ergosterol synthesis itself through consecutive reactions that mainly occur in the endoplasmic reticulum (ER) membrane. Firstly, the squalene synthase erg9 catalyzes the condensation of 2 farnesyl pyrophosphate moieties to form squalene, which is the precursor of all steroids. Secondly, squalene is converted into lanosterol by the consecutive action of the squalene epoxidase erg1 and the lanosterol synthase erg7. The lanosterol 14-alpha-demethylase erg11/cyp1 catalyzes C14-demethylation of lanosterol to produce 4,4'-dimethyl cholesta-8,14,24-triene-3-beta-ol. In the next steps, a complex process involving various demethylation, reduction and desaturation reactions catalyzed by the C-14 reductase erg24 and the C-4 demethylation complex erg25-erg26-erg27 leads to the production of zymosterol. Erg28 likely functions in the C-4 demethylation complex reaction by tethering erg26 and Erg27 to the endoplasmic reticulum or to facilitate interaction between these proteins. Then, the sterol 24-C-methyltransferase erg6 catalyzes the methyl transfer from S-adenosyl-methionine to the C-24 of zymosterol to form fecosterol. The C-8 sterol isomerase erg2 catalyzes the reaction which results in unsaturation at C-7 in the B ring of sterols and thus converts fecosterol to episterol. The sterol-C5-desaturases erg31 and erg32 then catalyze the introduction of a C-5 double bond in the B ring to produce 5-dehydroepisterol. The C-22 sterol desaturase erg5 further converts 5-dehydroepisterol into ergosta-5,7,22,24(28)-tetraen-3beta-ol by forming the C-22(23) double bond in the sterol side chain. Finally, ergosta-5,7,22,24(28)-tetraen-3beta-ol is substrate of the C-24(28) sterol reductase erg4 to produce ergosterol. In the genus Schizosaccharomyces, a second route exists between lanosterol and fecosterol, via the methylation of lanosterol to eburicol by erg6, followed by C14-demethylation by erg11/cyp1 and C4-demethylation by the demethylation complex erg25-erg26-erg27. The sequence is that of C-8 sterol isomerase erg2 from Schizosaccharomyces pombe (strain 972 / ATCC 24843) (Fission yeast).